The primary structure comprises 207 residues: DNA-directed RNA polymerase subunit alpha (207 aa).

The protein belongs to the RNA polymerase alpha chain family. In terms of assembly, in plastids the minimal PEP RNA polymerase catalytic core is composed of four subunits: alpha, beta, beta', and beta''. When a (nuclear-encoded) sigma factor is associated with the core the holoenzyme is formed, which can initiate transcription.

The protein localises to the plastid. The protein resides in the chloroplast. It catalyses the reaction RNA(n) + a ribonucleoside 5'-triphosphate = RNA(n+1) + diphosphate. Functionally, DNA-dependent RNA polymerase catalyzes the transcription of DNA into RNA using the four ribonucleoside triphosphates as substrates. In Euglena myxocylindracea, this protein is DNA-directed RNA polymerase subunit alpha (rpoA).